Here is an 856-residue protein sequence, read N- to C-terminus: Phosphoenolpyruvate synthase (856 aa).

H433 serves as the catalytic Tele-phosphohistidine intermediate. 7 residues coordinate substrate: R523, R636, E738, G759, S760, N761, and D762. A Mg(2+)-binding site is contributed by E738. D762 contributes to the Mg(2+) binding site. The Proton donor role is filled by C809.

It belongs to the PEP-utilizing enzyme family. Requires Mg(2+) as cofactor.

The catalysed reaction is pyruvate + ATP + H2O = phosphoenolpyruvate + AMP + phosphate + 2 H(+). The protein operates within carbohydrate biosynthesis; gluconeogenesis. Functionally, catalyzes the phosphorylation of pyruvate to phosphoenolpyruvate. The polypeptide is Phosphoenolpyruvate synthase (ppsA) (Aquifex aeolicus (strain VF5)).